A 565-amino-acid polypeptide reads, in one-letter code: Sulfite reductase [NADPH] hemoprotein beta-component (565 aa).

Residues cysteine 429, cysteine 435, cysteine 474, and cysteine 478 each contribute to the [4Fe-4S] cluster site. Cysteine 478 serves as a coordination point for siroheme.

It belongs to the nitrite and sulfite reductase 4Fe-4S domain family. As to quaternary structure, alpha(8)-beta(8). The alpha component is a flavoprotein, the beta component is a hemoprotein. Siroheme serves as cofactor. The cofactor is [4Fe-4S] cluster.

The catalysed reaction is hydrogen sulfide + 3 NADP(+) + 3 H2O = sulfite + 3 NADPH + 4 H(+). It functions in the pathway sulfur metabolism; hydrogen sulfide biosynthesis; hydrogen sulfide from sulfite (NADPH route): step 1/1. Component of the sulfite reductase complex that catalyzes the 6-electron reduction of sulfite to sulfide. This is one of several activities required for the biosynthesis of L-cysteine from sulfate. This Shewanella sp. (strain MR-7) protein is Sulfite reductase [NADPH] hemoprotein beta-component.